The chain runs to 313 residues: Protein PALE CRESS, chloroplastic (313 aa).

Residues 1 to 22 (MAATSLVLTCASPLFSSPRVIS) constitute a chloroplast transit peptide.

Expressed in green tissues, including leaves. Accumulates in chloroplasts of mature stomatal guard cells.

It is found in the plastid. The protein localises to the chloroplast. It localises to the chromoplast. The protein resides in the etioplast. Its subcellular location is the amyloplast. Required for the differentiation of chloroplast from proplastids or etioplasts, probably by modulating some chloroplast-encoded genes expression and mRNA maturation. Involved in leaf-cells differentiation. This chain is Protein PALE CRESS, chloroplastic (PAC), found in Arabidopsis thaliana (Mouse-ear cress).